An 883-amino-acid chain; its full sequence is Phosphoenolpyruvate carboxylase (883 aa).

Catalysis depends on residues histidine 138 and lysine 546.

This sequence belongs to the PEPCase type 1 family. Mg(2+) is required as a cofactor.

It carries out the reaction oxaloacetate + phosphate = phosphoenolpyruvate + hydrogencarbonate. In terms of biological role, forms oxaloacetate, a four-carbon dicarboxylic acid source for the tricarboxylic acid cycle. The sequence is that of Phosphoenolpyruvate carboxylase from Shigella dysenteriae serotype 1 (strain Sd197).